A 159-amino-acid chain; its full sequence is SsrA-binding protein (159 aa).

Residues 131–148 are compositionally biased toward basic and acidic residues; sequence YDKRQTLREKQDRREAER. The tract at residues 131 to 159 is disordered; it reads YDKRQTLREKQDRREAERTISAIKRKQRA.

It belongs to the SmpB family.

The protein localises to the cytoplasm. Functionally, required for rescue of stalled ribosomes mediated by trans-translation. Binds to transfer-messenger RNA (tmRNA), required for stable association of tmRNA with ribosomes. tmRNA and SmpB together mimic tRNA shape, replacing the anticodon stem-loop with SmpB. tmRNA is encoded by the ssrA gene; the 2 termini fold to resemble tRNA(Ala) and it encodes a 'tag peptide', a short internal open reading frame. During trans-translation Ala-aminoacylated tmRNA acts like a tRNA, entering the A-site of stalled ribosomes, displacing the stalled mRNA. The ribosome then switches to translate the ORF on the tmRNA; the nascent peptide is terminated with the 'tag peptide' encoded by the tmRNA and targeted for degradation. The ribosome is freed to recommence translation, which seems to be the essential function of trans-translation. This is SsrA-binding protein from Streptomyces coelicolor (strain ATCC BAA-471 / A3(2) / M145).